The chain runs to 338 residues: Phenylalanine--tRNA ligase alpha subunit (338 aa).

Position 253 (Glu253) interacts with Mg(2+).

The protein belongs to the class-II aminoacyl-tRNA synthetase family. Phe-tRNA synthetase alpha subunit type 1 subfamily. Tetramer of two alpha and two beta subunits. It depends on Mg(2+) as a cofactor.

It is found in the cytoplasm. The catalysed reaction is tRNA(Phe) + L-phenylalanine + ATP = L-phenylalanyl-tRNA(Phe) + AMP + diphosphate + H(+). The sequence is that of Phenylalanine--tRNA ligase alpha subunit from Legionella pneumophila (strain Lens).